A 219-amino-acid polypeptide reads, in one-letter code: Transmembrane protein 17B (219 aa).

N-linked (GlcNAc...) asparagine glycosylation is present at N26. Helical transmembrane passes span 51–71 (MMLY…IITM), 84–104 (ILLT…LYIG), 116–136 (LAGF…FLLT), and 147–167 (LAVH…SFLV). N-linked (GlcNAc...) asparagine glycans are attached at residues N195 and N203.

It belongs to the TMEM17 family. Part of the tectonic-like complex (also named B9 complex).

The protein localises to the cell projection. It is found in the cilium membrane. In terms of biological role, transmembrane component of the tectonic-like complex, a complex localized at the transition zone of primary cilia and acting as a barrier that prevents diffusion of transmembrane proteins between the cilia and plasma membranes. Required for ciliogenesis and sonic hedgehog/SHH signaling. In Xenopus tropicalis (Western clawed frog), this protein is Transmembrane protein 17B (Tmem17-b).